A 617-amino-acid chain; its full sequence is Zinc finger protein 221 (617 aa).

In terms of domain architecture, KRAB spans 30–100 (VTFKDVAVVF…KTTSQREGNS (71 aa)). 3 C2H2-type zinc fingers span residues 170–192 (YRCNECKQSFSDVSVFDLHQQSH), 198–220 (HTCGECGKSFCYSPALHIHQRVH), and 226–248 (YKCDVCGKEFNQSSHLQTHQRVH). The C2H2-type 4; degenerate zinc finger occupies 254 to 276 (FKCGQCGKGFHSRSALNVHCKLH). 11 consecutive C2H2-type zinc fingers follow at residues 282–304 (YNCEECGKAFIHDSQLQEHQRIH), 310–332 (FKCDICGKSFRVRSRLNRHSMVH), 338–360 (FRCDTCGKNFRQRSALNSHSMVH), 366–388 (YKCEQCGKGFICRRDFCKHQMVH), 394–416 (YNCKECGKTFRWSSCLLNHQQVH), 422–444 (FKCEECGKGFYTNSRRSSHQRSH), 450–472 (YNCEECGKDYKRRLDLEFHQRVH), 478–500 (YNCKECGKSFGWASCLLKHQRLH), 506–528 (FKCEECGKRFTQSSQLHSHQTCH), 534–556 (YKCEQCEKGYNSKFNLDMHQRVH), and 562–584 (YNCKECGKSFGWASCLLKHQRLH).

This sequence belongs to the krueppel C2H2-type zinc-finger protein family.

Its subcellular location is the nucleus. Its function is as follows. May be involved in transcriptional regulation. The protein is Zinc finger protein 221 (ZNF221) of Homo sapiens (Human).